The primary structure comprises 485 residues: Sulfated surface glycoprotein 185 (485 aa).

Positions 1–20 are cleaved as a signal peptide; the sequence is MSKLLLVALFGAIAVVATSA. Asparagine 193 is a glycosylation site (N-linked (GlcNAc...) asparagine). The tract at residues 212-317 is disordered; the sequence is LSGPNVNPIG…PPVPPPPSPP (106 aa). Pro residues-rich tracts occupy residues 221–234 and 241–317; these read GPAP…PSPQ and PPSP…PSPP. Residue asparagine 347 is glycosylated (N-linked (GlcNAc...) asparagine).

In terms of assembly, polymer. In terms of processing, intersubunit cross-links are formed between saccharide chains rather than between polypeptide chains. Hydroxylated on proline residues in the Pro-rich central domain. Post-translationally, glycosylated; contains sulfate-substituted glycans.

The extracellular matrix (ECM) of Volvox contains insoluble fibrous layers that surround individual cells at a distance to form contiguous cellular compartments. SSG 185 is the monomeric precursor of this substructure (C3Z structure). This chain is Sulfated surface glycoprotein 185, found in Volvox carteri (Green alga).